The following is a 163-amino-acid chain: NADH-quinone oxidoreductase subunit I (163 aa).

4Fe-4S ferredoxin-type domains lie at 54 to 84 (LRRY…IDSH) and 94 to 123 (TRYD…LTRL). 8 residues coordinate [4Fe-4S] cluster: Cys-64, Cys-67, Cys-70, Cys-74, Cys-103, Cys-106, Cys-109, and Cys-113.

This sequence belongs to the complex I 23 kDa subunit family. NDH-1 is composed of 14 different subunits. Subunits NuoA, H, J, K, L, M, N constitute the membrane sector of the complex. Requires [4Fe-4S] cluster as cofactor.

Its subcellular location is the cell inner membrane. The enzyme catalyses a quinone + NADH + 5 H(+)(in) = a quinol + NAD(+) + 4 H(+)(out). Its function is as follows. NDH-1 shuttles electrons from NADH, via FMN and iron-sulfur (Fe-S) centers, to quinones in the respiratory chain. The immediate electron acceptor for the enzyme in this species is believed to be ubiquinone. Couples the redox reaction to proton translocation (for every two electrons transferred, four hydrogen ions are translocated across the cytoplasmic membrane), and thus conserves the redox energy in a proton gradient. This chain is NADH-quinone oxidoreductase subunit I, found in Halorhodospira halophila (strain DSM 244 / SL1) (Ectothiorhodospira halophila (strain DSM 244 / SL1)).